Here is a 139-residue protein sequence, read N- to C-terminus: ATP synthase epsilon chain (139 aa).

It belongs to the ATPase epsilon chain family. In terms of assembly, F-type ATPases have 2 components, CF(1) - the catalytic core - and CF(0) - the membrane proton channel. CF(1) has five subunits: alpha(3), beta(3), gamma(1), delta(1), epsilon(1). CF(0) has three main subunits: a, b and c.

The protein resides in the cell membrane. Functionally, produces ATP from ADP in the presence of a proton gradient across the membrane. This Ligilactobacillus salivarius (strain UCC118) (Lactobacillus salivarius) protein is ATP synthase epsilon chain.